The primary structure comprises 562 residues: Glutamyl-tRNA(Gln) amidotransferase subunit B, chloroplastic/mitochondrial (562 aa).

A disordered region spans residues 48-76 (SVASNSKREPRPVKTRVMTQERGSGETQT). Residues 64–76 (VMTQERGSGETQT) are compositionally biased toward polar residues.

It belongs to the GatB/GatE family. GatB subfamily. In terms of assembly, subunit of the heterotrimeric GatCAB amidotransferase (AdT) complex, composed of A, B and C subunits.

The protein resides in the mitochondrion. It localises to the plastid. The protein localises to the chloroplast. It catalyses the reaction L-glutamyl-tRNA(Gln) + L-glutamine + ATP + H2O = L-glutaminyl-tRNA(Gln) + L-glutamate + ADP + phosphate + H(+). Functionally, allows the formation of correctly charged Gln-tRNA(Gln) through the transamidation of misacylated Glu-tRNA(Gln) in chloroplasts and mitochondria. The reaction takes place in the presence of glutamine and ATP through an activated gamma-phospho-Glu-tRNA(Gln). This Physcomitrium patens (Spreading-leaved earth moss) protein is Glutamyl-tRNA(Gln) amidotransferase subunit B, chloroplastic/mitochondrial.